Reading from the N-terminus, the 704-residue chain is Polyribonucleotide nucleotidyltransferase (704 aa).

Residues aspartate 487 and aspartate 493 each contribute to the Mg(2+) site. Residues 554–613 enclose the KH domain; sequence PRLLTIKIHPDKIREVIGKGGSTIQAITKETGTQIDIQDDGTIIIASVNAIAAQAAKSRI. The 69-residue stretch at 623 to 691 folds into the S1 motif domain; it reads GRIYEGKVAK…KQGRIRLSIK (69 aa).

It belongs to the polyribonucleotide nucleotidyltransferase family. Component of the RNA degradosome, which is a multiprotein complex involved in RNA processing and mRNA degradation. Requires Mg(2+) as cofactor.

The protein resides in the cytoplasm. The enzyme catalyses RNA(n+1) + phosphate = RNA(n) + a ribonucleoside 5'-diphosphate. Functionally, involved in mRNA degradation. Catalyzes the phosphorolysis of single-stranded polyribonucleotides processively in the 3'- to 5'-direction. The sequence is that of Polyribonucleotide nucleotidyltransferase from Xanthomonas euvesicatoria pv. vesicatoria (strain 85-10) (Xanthomonas campestris pv. vesicatoria).